Here is a 290-residue protein sequence, read N- to C-terminus: Phosphoribulokinase 1 (290 aa).

Residue 12-20 coordinates ATP; the sequence is GSSGAGTST.

This sequence belongs to the phosphoribulokinase family. In terms of assembly, homooctamer.

The enzyme catalyses D-ribulose 5-phosphate + ATP = D-ribulose 1,5-bisphosphate + ADP + H(+). The protein operates within carbohydrate biosynthesis; Calvin cycle. With respect to regulation, activated by NADH and inhibited by phosphoenolpyruvate. The protein is Phosphoribulokinase 1 (prkA) of Cereibacter sphaeroides (Rhodobacter sphaeroides).